A 332-amino-acid polypeptide reads, in one-letter code: uncharacterized protein (332 aa).

A helical membrane pass occupies residues cysteine 27 to leucine 47.

The protein localises to the membrane. This is an uncharacterized protein from Treponema pallidum (strain Nichols).